We begin with the raw amino-acid sequence, 189 residues long: MAKVNLEQIEHAVRLILEAIGDDPNREGVLDTPRRVAKMYAEVFSGMHEDPKEHLHKVFGEDHEELVLVKDIPFYSMCEHHLVPFYGVAHVAYIPRGGKVTGLSKLARTVDTIARRPQLQERITSTVADSIMEVLEPHGVMVVVEAEHMCMTMRGVKKPGAKTVTTAVRGVLENDAAARSEILSFIKSK.

Zn(2+)-binding residues include C78, H81, and C150.

It belongs to the GTP cyclohydrolase I family. As to quaternary structure, homomer.

It catalyses the reaction GTP + H2O = 7,8-dihydroneopterin 3'-triphosphate + formate + H(+). It functions in the pathway cofactor biosynthesis; 7,8-dihydroneopterin triphosphate biosynthesis; 7,8-dihydroneopterin triphosphate from GTP: step 1/1. This is GTP cyclohydrolase 1 from Bacillus cytotoxicus (strain DSM 22905 / CIP 110041 / 391-98 / NVH 391-98).